The following is a 354-amino-acid chain: Peptide chain release factor 1 (354 aa).

Glutamine 230 is modified (N5-methylglutamine). A disordered region spans residues 282–301 (KQASDAIKKQMIGSGDRSER).

The protein belongs to the prokaryotic/mitochondrial release factor family. Methylated by PrmC. Methylation increases the termination efficiency of RF1.

The protein localises to the cytoplasm. Functionally, peptide chain release factor 1 directs the termination of translation in response to the peptide chain termination codons UAG and UAA. The polypeptide is Peptide chain release factor 1 (Leptospira borgpetersenii serovar Hardjo-bovis (strain L550)).